The sequence spans 685 residues: Stromal interaction molecule 1 (685 aa).

Residues 1-22 form the signal peptide; sequence MDVCVRLALWLLWGLLLHQGQS. Over 23-213 the chain is Extracellular; sequence LSHSHSEKAT…LLTRHNHLKD (191 aa). 2 consecutive EF-hand domains span residues 64–97 and 102–126; these read SFEAVRNIHKLMDDDANGDVDVEESDEFLREDLN and TVKHSTFHGEDKLISVEDLWKAWKS. Residues D76, D78, N80, D82, and E87 each coordinate Ca(2+). N-linked (GlcNAc...) asparagine glycans are attached at residues N131 and N171. An SAM domain is found at 132–200; the sequence is WTVDEVVQWL…QLKALDTVLF (69 aa). A helical transmembrane segment spans residues 214–234; the sequence is FMLVVSIVIGVGGCWFAYIQN. Residues 235–685 are Cytoplasmic-facing; it reads RYSKEHMKKM…LKIFKKPLKK (451 aa). Positions 248–442 form a coiled coil; sequence LEGLHRAEQS…IEILCGFQIV (195 aa). S257 carries the phosphoserine modification. Positions 344–442 are SOAR/CAD; it reads PEALQKWLQL…IEILCGFQIV (99 aa). A contributes to fast Ca(2+)-dependent inactivation of CRAC channels region spans residues 475–483; sequence DDVDDMDEE. Residues 490 to 499 show a composition bias toward low complexity; sequence MQSPSLQSSV. Residues 490–542 form a disordered region; sequence MQSPSLQSSVRQRLTEPQHGLGSQRDLTHSDSESSLHMSDRQRVAPKPPQMSR. The residue at position 504 (T504) is a Phosphothreonine. A Phosphoserine modification is found at S512. The segment covering 515-532 has biased composition (basic and acidic residues); that stretch reads DLTHSDSESSLHMSDRQR. At T517 the chain carries Phosphothreonine. Phosphoserine is present on residues S519, S521, S523, S524, S567, S575, S602, S608, S618, S621, and S628. The tract at residues 596 to 685 is disordered; the sequence is LMELSPSAPP…LKIFKKPLKK (90 aa). The segment covering 608–620 has biased composition (low complexity); sequence SPHLDSSRSHSPS. Residues 642–645 carry the Microtubule tip localization signal motif; that stretch reads TRIP. The span at 655–666 shows a compositional bias: acidic residues; the sequence is EEDNGSIGEETD. S660 is modified (phosphoserine). Phosphothreonine is present on T665. S668 bears the Phosphoserine mark. The segment covering 670–685 has biased composition (basic residues); sequence GRKKFPLKIFKKPLKK. The interval 672–685 is required for generation of inwardly rectifying CRAC currents; the sequence is KKFPLKIFKKPLKK.

In terms of assembly, monomer in the presence of Ca(2+); it oligomerizes in absence of Ca(2+). Forms homooligomers and heterooligomers with STIM2. Interacts with pore-forming subunits of CRAC channels, ORAI1, ORAI2 and ORAI3; this interaction is potentiated upon Ca(2+) store depletion. Interacts (via the transmembrane region and the SOAR/CAD domain) with SPPL3; the interaction promotes the binding of STIM1 to ORAI1. Interacts (via the SOAR/CAD domain) with ORAI1. Interacts with MAPRE1; probably required for targeting to the growing microtubule plus ends. Interacts with CRACR2A/EFCAB4B; the interaction is direct and takes place in absence of Ca(2+). Forms a complex with CRACR2A/EFCAB4B and ORAI1 at low concentration of Ca(2+), the complex dissociates at elevated Ca(2+) concentrations. Interacts with SARAF, promoting a slow inactivation of STIM1-dependent SOCE activity, possibly by facilitating the deoligomerization of STIM1. Interacts with EFHB; the interaction takes place upon Ca(2+)-store depletion and inhibits the association with SARAF. Interacts with ASPH (isoform 8). Interacts with SLC35G1; intracellular Ca(2+)-dependent. May interact with ATP1A1, ATP2A2, ATP2B1, ATP2B4, KPNB1 and XPO1; through SLC35G1. Interacts with TMEM203. Interacts with STIMATE, promoting STIM1 conformational switch. Interacts with TMEM178A. Interacts with CASQ1 (via C-terminal end and preferentially with the monomeric form); this interaction increases in response to a depletion of intracellular Ca(2+), decreases both STIM1 aggregation and clustering, interaction of STIM1 with ORAI1 and store-operated Ca(2+) entry (SOCE) activity. Interacts with ADCY8. In terms of processing, glycosylation is required for cell surface expression. Phosphorylated predominantly on Ser residues. As to expression, ubiquitously expressed in various human primary cells and tumor cell lines.

Its subcellular location is the cell membrane. The protein localises to the endoplasmic reticulum membrane. It localises to the cytoplasm. It is found in the cytoskeleton. The protein resides in the sarcoplasmic reticulum. Its function is as follows. Acts as a Ca(2+) sensor that gates two major inward rectifying Ca(2+) channels at the plasma membrane: Ca(2+) release-activated Ca(2+) (CRAC) channels and arachidonate-regulated Ca(2+)-selective (ARC) channels. Plays a role in mediating store-operated Ca(2+) entry (SOCE), a Ca(2+) influx following depletion of intracellular Ca(2+) stores. Upon Ca(2+) depletion, translocates from the endoplasmic reticulum to the plasma membrane where it activates CRAC channel pore-forming subunits ORA1, ORA2 and ORAI3 to generate sustained and oscillatory Ca(2+) entry. Involved in enamel formation. This chain is Stromal interaction molecule 1 (STIM1), found in Homo sapiens (Human).